Here is a 795-residue protein sequence, read N- to C-terminus: Cyclin-dependent kinase 11B (795 aa).

Residues 17 to 60 (LQEKKRRKEQEEKAEIKRLKNSDDRDSKRDSLEEGELRDHRMEI) show a composition bias toward basic and acidic residues. Residues 17 to 412 (LQEKKRRKEQ…EGDYVPDSPA (396 aa)) form a disordered region. 2 positions are modified to phosphoserine: Ser47 and Ser72. The span at 95-113 (EKAHHRKDEKRKEKRRHRS) shows a compositional bias: basic residues. Composition is skewed to basic and acidic residues over residues 114-131 (HSAEGGKHARVKEKEREH), 138-227 (REEQ…DKVK), 238-253 (PPRERFELGDGRKPGE), and 264-276 (QLKEEKMEERDLL). Ser115 bears the Phosphoserine mark. At Ser283 the chain carries Phosphoserine. Over residues 291–302 (SAESSSAESGSG) the composition is skewed to low complexity. 2 stretches are compositionally biased toward acidic residues: residues 303 to 364 (SEEE…EERE) and 383 to 392 (ESEEAEEEVG). One can recognise a Protein kinase domain in the interval 438 to 723 (FQCLNRIEEG…AEDGLKHEYF (286 aa)). Residues 444 to 452 (IEEGTYGVV) and Lys467 contribute to the ATP site. Position 482 is a phosphoserine; by CDK7 (Ser482). Position 488 is a phosphothreonine; by CDK7 (Thr488). Asp562 functions as the Proton acceptor in the catalytic mechanism. Phosphoserine is present on Ser589. Phosphotyrosine is present on Tyr594. Thr595 carries the post-translational modification Phosphothreonine. Residue Lys641 forms a Glycyl lysine isopeptide (Lys-Gly) (interchain with G-Cter in SUMO2) linkage. The interval 733–795 (SMFPTWPAKS…AAGPGFSLKF (63 aa)) is disordered. Thr751 is modified (phosphothreonine). Ser752 bears the Phosphoserine mark.

It belongs to the protein kinase superfamily. CMGC Ser/Thr protein kinase family. CDC2/CDKX subfamily. In terms of assembly, cleaved isoform SV9 (p110C) binds to the serine/threonine kinase PAK1 and RANBP9. p110C interacts with RNPS1. Isoform 7, but not isoform SV9, nor its cleavage product p110C, interacts with CCND3. Interacts with CCNL1 and CCNL2. Forms complexes with pre-mRNA-splicing factors, including at least SRSF1, SRSF2 and SRSF7/SLU7. Interacts with isoform 5 of MYO18A. As to quaternary structure, (Microbial infection) Interacts with human herpes virus 1 (HHV-1) transcriptional regulator ICP22. Mg(2+) serves as cofactor. During FAS- or TNF-induced apoptosis, isoform SV9 is cleaved by caspases to produce p110C, a fragment that contains the C-terminal kinase domain. Post-translationally, phosphorylation at Ser-115 creates a binding site for 14-3-3 proteins. p110C can be autophosphorylated. In terms of tissue distribution, expressed ubiquitously. Some evidence of isoform-specific tissue distribution.

Its subcellular location is the cytoplasm. The protein resides in the nucleus. The catalysed reaction is L-seryl-[protein] + ATP = O-phospho-L-seryl-[protein] + ADP + H(+). It carries out the reaction L-threonyl-[protein] + ATP = O-phospho-L-threonyl-[protein] + ADP + H(+). Its activity is regulated as follows. Phosphorylation at Thr-448 or Tyr-449 inactivates the enzyme, while phosphorylation at Thr-595 activates it. Plays multiple roles in cell cycle progression, cytokinesis and apoptosis. Involved in pre-mRNA splicing in a kinase activity-dependent manner. Isoform 7 may act as a negative regulator of normal cell cycle progression. In Homo sapiens (Human), this protein is Cyclin-dependent kinase 11B (CDK11B).